Here is a 443-residue protein sequence, read N- to C-terminus: ATP-dependent protease ATPase subunit HslU (443 aa).

ATP contacts are provided by residues Ile-18, 60–65 (GVGKTE), Asp-256, Glu-321, and Arg-393.

This sequence belongs to the ClpX chaperone family. HslU subfamily. In terms of assembly, a double ring-shaped homohexamer of HslV is capped on each side by a ring-shaped HslU homohexamer. The assembly of the HslU/HslV complex is dependent on binding of ATP.

The protein localises to the cytoplasm. Its function is as follows. ATPase subunit of a proteasome-like degradation complex; this subunit has chaperone activity. The binding of ATP and its subsequent hydrolysis by HslU are essential for unfolding of protein substrates subsequently hydrolyzed by HslV. HslU recognizes the N-terminal part of its protein substrates and unfolds these before they are guided to HslV for hydrolysis. This is ATP-dependent protease ATPase subunit HslU from Buchnera aphidicola subsp. Acyrthosiphon pisum (strain 5A).